A 55-amino-acid chain; its full sequence is Large ribosomal subunit protein bL33 (55 aa).

It belongs to the bacterial ribosomal protein bL33 family.

This Acidothermus cellulolyticus (strain ATCC 43068 / DSM 8971 / 11B) protein is Large ribosomal subunit protein bL33.